Here is a 341-residue protein sequence, read N- to C-terminus: Tetraacyldisaccharide 4'-kinase (341 aa).

54–61 (TVGGAGKT) is a binding site for ATP.

This sequence belongs to the LpxK family.

The enzyme catalyses a lipid A disaccharide + ATP = a lipid IVA + ADP + H(+). Its pathway is glycolipid biosynthesis; lipid IV(A) biosynthesis; lipid IV(A) from (3R)-3-hydroxytetradecanoyl-[acyl-carrier-protein] and UDP-N-acetyl-alpha-D-glucosamine: step 6/6. Its function is as follows. Transfers the gamma-phosphate of ATP to the 4'-position of a tetraacyldisaccharide 1-phosphate intermediate (termed DS-1-P) to form tetraacyldisaccharide 1,4'-bis-phosphate (lipid IVA). In Brucella ovis (strain ATCC 25840 / 63/290 / NCTC 10512), this protein is Tetraacyldisaccharide 4'-kinase.